Consider the following 64-residue polypeptide: Translation machinery-associated protein 7 homolog (64 aa).

The tract at residues 1-64 (MSGRQGGKAK…GGGIKKSGKK (64 aa)) is disordered. Residues 21–50 (DLSEEDVEFKKKQQEEAKKIKEMAAKAGQR) are a coiled coil. Residues 28 to 44 (EFKKKQQEEAKKIKEMA) show a composition bias toward basic and acidic residues. The segment covering 53 to 64 (LLGGGIKKSGKK) has biased composition (gly residues).

It belongs to the TMA7 family.

This is Translation machinery-associated protein 7 homolog from Caenorhabditis elegans.